The following is an 871-amino-acid chain: DNA mismatch repair protein MutS (871 aa).

616 to 623 (GPNMAGKS) is an ATP binding site. The segment at 801–825 (ETEKTEESMEGTNLPKKKKEEKTSS) is disordered.

It belongs to the DNA mismatch repair MutS family.

In terms of biological role, this protein is involved in the repair of mismatches in DNA. It is possible that it carries out the mismatch recognition step. This protein has a weak ATPase activity. The polypeptide is DNA mismatch repair protein MutS (Clostridium kluyveri (strain NBRC 12016)).